The sequence spans 113 residues: 2Fe-2S ferredoxin (113 aa).

The 103-residue stretch at 2 to 104 folds into the 2Fe-2S ferredoxin-type domain; the sequence is PKVIFLPNED…DLVVEIPKYN (103 aa). 4 residues coordinate [2Fe-2S] cluster: C42, C48, C51, and C87.

The protein belongs to the adrenodoxin/putidaredoxin family. [2Fe-2S] cluster is required as a cofactor.

In terms of biological role, ferredoxin are iron-sulfur proteins that transfer electrons in a wide variety of metabolic reactions. The polypeptide is 2Fe-2S ferredoxin (fdx) (Haemophilus influenzae (strain ATCC 51907 / DSM 11121 / KW20 / Rd)).